The primary structure comprises 343 residues: GTPase Obg (343 aa).

An Obg domain is found at Met1–Ile159. The OBG-type G domain maps to Ala160 to Ala327. Residues Gly166–Ser173, Phe191–His195, Asp212–Gly215, Ser279–Asp282, and Ser308–Val310 each bind GTP. Mg(2+) is bound by residues Ser173 and Thr193.

The protein belongs to the TRAFAC class OBG-HflX-like GTPase superfamily. OBG GTPase family. Monomer. The cofactor is Mg(2+).

The protein resides in the cytoplasm. An essential GTPase which binds GTP, GDP and possibly (p)ppGpp with moderate affinity, with high nucleotide exchange rates and a fairly low GTP hydrolysis rate. Plays a role in control of the cell cycle, stress response, ribosome biogenesis and in those bacteria that undergo differentiation, in morphogenesis control. This chain is GTPase Obg, found in Mesorhizobium japonicum (strain LMG 29417 / CECT 9101 / MAFF 303099) (Mesorhizobium loti (strain MAFF 303099)).